The primary structure comprises 261 residues: DNA repair protein RecO (261 aa).

It belongs to the RecO family.

Its function is as follows. Involved in DNA repair and RecF pathway recombination. The polypeptide is DNA repair protein RecO (Limosilactobacillus reuteri (strain DSM 20016) (Lactobacillus reuteri)).